Reading from the N-terminus, the 250-residue chain is AA9 family lytic polysaccharide monooxygenase B (250 aa).

The first 21 residues, 1-21 (MTLSKITSIAGLLASASLVAG), serve as a signal peptide directing secretion. Residues H22 and H107 each coordinate Cu(2+). A Methylhistidine modification is found at H22. Disulfide bonds link C77–C199 and C118–C122. N159 is a glycosylation site (N-linked (GlcNAc...) asparagine). O2 is bound by residues H185 and Q194. Y196 serves as a coordination point for Cu(2+).

This sequence belongs to the polysaccharide monooxygenase AA9 family. The cofactor is Cu(2+). The catalytically essential N-terminal histidine His-22 is post-translationally modified by methylation to prevent protonation of the histidine side chain, and protect the critical active site of the enzyme from oxidative damage.

It is found in the secreted. The enzyme catalyses [(1-&gt;4)-beta-D-glucosyl]n+m + reduced acceptor + O2 = 4-dehydro-beta-D-glucosyl-[(1-&gt;4)-beta-D-glucosyl]n-1 + [(1-&gt;4)-beta-D-glucosyl]m + acceptor + H2O.. Lytic polysaccharide monooxygenase (LPMO) that depolymerizes crystalline and amorphous polysaccharides via the oxidation of scissile alpha- or beta-(1-4)-glycosidic bonds, yielding C1 and C4 oxidation products. Catalysis by LPMOs requires the reduction of the active-site copper from Cu(II) to Cu(I) by a reducing agent and H(2)O(2) or O(2) as a cosubstrate. Shows activity on phosphoric acid swollen cellulose, on NaOH pretreated soy spent flakes as well as on crystalline cellulose (Avicel). Does not have a positive effect on cel6A activity, but acts synergistically with endoglucanase egl7. The sequence is that of AA9 family lytic polysaccharide monooxygenase B from Aspergillus fumigatus (strain ATCC MYA-4609 / CBS 101355 / FGSC A1100 / Af293) (Neosartorya fumigata).